Here is a 227-residue protein sequence, read N- to C-terminus: Enolase-phosphatase E1 (227 aa).

This sequence belongs to the HAD-like hydrolase superfamily. MasA/MtnC family. Monomer. Mg(2+) serves as cofactor.

The catalysed reaction is 5-methylsulfanyl-2,3-dioxopentyl phosphate + H2O = 1,2-dihydroxy-5-(methylsulfanyl)pent-1-en-3-one + phosphate. The protein operates within amino-acid biosynthesis; L-methionine biosynthesis via salvage pathway; L-methionine from S-methyl-5-thio-alpha-D-ribose 1-phosphate: step 3/6. It functions in the pathway amino-acid biosynthesis; L-methionine biosynthesis via salvage pathway; L-methionine from S-methyl-5-thio-alpha-D-ribose 1-phosphate: step 4/6. In terms of biological role, bifunctional enzyme that catalyzes the enolization of 2,3-diketo-5-methylthiopentyl-1-phosphate (DK-MTP-1-P) into the intermediate 2-hydroxy-3-keto-5-methylthiopentenyl-1-phosphate (HK-MTPenyl-1-P), which is then dephosphorylated to form the acireductone 1,2-dihydroxy-3-keto-5-methylthiopentene (DHK-MTPene). The chain is Enolase-phosphatase E1 from Gluconobacter oxydans (strain 621H) (Gluconobacter suboxydans).